The primary structure comprises 351 residues: Molybdenum import ATP-binding protein ModC (351 aa).

In terms of domain architecture, ABC transporter spans 1-229 (MLKINVKKQL…PLFLPWKLED (229 aa)). 31–38 (GLSGSGKT) contacts ATP. A Mop domain is found at 289-351 (KTSIRNILHG…FAQIKAVSVL (63 aa)).

The protein belongs to the ABC transporter superfamily. Molybdate importer (TC 3.A.1.8) family. In terms of assembly, the complex is composed of two ATP-binding proteins (ModC), two transmembrane proteins (ModB) and a solute-binding protein (ModA).

It localises to the cell inner membrane. It catalyses the reaction molybdate(out) + ATP + H2O = molybdate(in) + ADP + phosphate + H(+). Its function is as follows. Part of the ABC transporter complex ModABC involved in molybdenum import. Responsible for energy coupling to the transport system. The sequence is that of Molybdenum import ATP-binding protein ModC from Pasteurella multocida (strain Pm70).